A 671-amino-acid polypeptide reads, in one-letter code: DNA ligase (671 aa).

NAD(+) is bound by residues 32–36, 81–82, and Glu-113; these read DAEYD and SL. The active-site N6-AMP-lysine intermediate is Lys-115. Positions 136, 173, 290, and 314 each coordinate NAD(+). 4 residues coordinate Zn(2+): Cys-408, Cys-411, Cys-426, and Cys-432. Residues 593-671 form the BRCT domain; it reads EIDSPFAGKT…EAEMIRLLGA (79 aa).

The protein belongs to the NAD-dependent DNA ligase family. LigA subfamily. It depends on Mg(2+) as a cofactor. The cofactor is Mn(2+).

The catalysed reaction is NAD(+) + (deoxyribonucleotide)n-3'-hydroxyl + 5'-phospho-(deoxyribonucleotide)m = (deoxyribonucleotide)n+m + AMP + beta-nicotinamide D-nucleotide.. DNA ligase that catalyzes the formation of phosphodiester linkages between 5'-phosphoryl and 3'-hydroxyl groups in double-stranded DNA using NAD as a coenzyme and as the energy source for the reaction. It is essential for DNA replication and repair of damaged DNA. The protein is DNA ligase of Salmonella choleraesuis (strain SC-B67).